The sequence spans 441 residues: Protein arginine methyltransferase NDUFAF7, mitochondrial (441 aa).

The transit peptide at 1 to 46 directs the protein to the mitochondrion; that stretch reads MNFLAAAGVRRLCAMRAVLPCLWRGKYFSSGNEPAENNTVTPMLRH. The tract at residues 415 to 434 is disordered; the sequence is GRNHQTNARQSKPSPSPVAG. A compositionally biased stretch (polar residues) spans 418-427; sequence HQTNARQSKP.

It belongs to the NDUFAF7 family. Interacts with NDUFS2.

Its subcellular location is the mitochondrion. The enzyme catalyses L-arginyl-[protein] + 2 S-adenosyl-L-methionine = N(omega),N(omega)'-dimethyl-L-arginyl-[protein] + 2 S-adenosyl-L-homocysteine + 2 H(+). Its function is as follows. Arginine methyltransferase involved in the assembly or stability of mitochondrial NADH:ubiquinone oxidoreductase complex (complex I). Acts by mediating symmetric dimethylation of 'Arg-118' of NDUFS2 after it assembles into the complex I, stabilizing the early intermediate complex. The chain is Protein arginine methyltransferase NDUFAF7, mitochondrial from Bos taurus (Bovine).